The chain runs to 1749 residues: MESQQLSQHSPISHGSACASVTSKEVHTNQDPLDVSASKIQEYDKASTKANSQQTTTPASSAVPENPHHASPQTAQSHSPQNGPYPQQCMMTQNQANPSDWSFYGRPSMIPYTPYQMSPMYFPPGPHSQFPQYPSSVGTPLSTPSPESGNTFTDSSSADSDMTSTKKYVRPPPMLTSPNDFLNWVKTYIKFLQNSNLGGIIPTVNGKPVRQITDDELTFLYNTFQIFAPSQFLPTWVKDILSVDYTDIMKILSKSIEKMQSDTQEANDIVTLANLQYNGSTPADAFETKVTNIIDRLNNNGIHINNKVACQLIMRGLSGEYKFLRYTRHRHLNMTVAELFLDIHAIYEEQQGSRNSKPNYRRNPSDEKNDSRSYTNTTKPKVIARNPQKTNNSKSKTARAHNVSTSNNSPSTDNDSISKSTTEPIQLNNKHDLHLGQKLTESTVNHTNHSDDELPGHLLLDSGASRTLIRSAHHIHSASSNPDINVVDAQKRNIPINAIGDLQFHFQDNTKTSIKVLHTPNIAYDLLSLNELAAVDITACFTKNVLERSDGTVLAPIVKYGDFYWVSKKYLLPSNISVPTINNVHTSESTRKYPYPFIHRMLAHANAQTIRYSLKNNTITYFNESDVDWSSAIDYQCPDCLIGKSTKHRHIKGSRLKYQNSYEPFQYLHTDIFGPVHNLPKSAPSYFISFTDETTKFRWVYPLHDRREDSILDVFTTILAFIKNQFQASVLVIQMDRGSEYTNRTLHKFLEKNGITPCYTTTADSRAHGVAERLNRTLLDDCRTQLQCSGLPNHLWFSAIEFSTIVRNSLASPKSKKSARQHAGLAGLDISTLLPFGQPVIVNDHNPNSKIHPRGIPGYALHPSRNSYGYIIYLPSLKKTVDTTNYVILQGKESRLDQFNYDALTFDEDLNRLTASYQSFIASNEIQQSDDLNFQSDIELHPEQPRNVLSKAVSPTDSTPPSTHTEDSKRVSKTNIRAPREVDPNISKSDILPSKKRSSTPQISDIESTGSGGMHRLDVPLLAPMSQSNTHESSHTSKSKDFRHSDSYSDNETNHTNVPISSTGGTNNKTVPQTSEQETEKRIIHRSPSIDTSSSESNSLHHVVPIKTSDTCPKENTEESIIADLPLPDLPPEPPTKLSDSFKELPPINSRQTNSSLGGIGDSNAYTTINSKKRSLEDNETEIKVSRDTWNTKNMRSLEPPRSKKRIHLIAAVKAVKSIKPIRTTLRYDEAITYNKDIKEKEKYIEAYHKEVNQLLKMKTWDTDKYYDRKEIDPKRVINSMFIFNRKRDGTHKARFVARGDIQHPDTYDSGMQSNTVHHYALMTSLSLALDNNYYITQLDISSAYLYADIKEELYIRPPPHLGMNDKLIRLKKSLYGLKQSGANWYETIKSYLIEQCDMEEVRGWSCVFKNSQVTICLFVDDMILFSKDLNANKKIITTLKKQYDTKIINLGESDNEIQYDILGLEIKYQRSKYMKLGMEKSLTEKLPKLNVHLNPKGKKLSAPGQPGLYIDQDELEIDEDEYKEKVHEMQKLIGLASYVGYKFRFDLLYYINTLAQHILFPSRQVLDMTYELIQFMWDTRDKQLIWHKNKPTKPDNKLVAISDASYGNQPYYKSQIGNIFLLNGKVIGGKSTKASLTCTSTTEAEIHAVSEAIPLLNNLSHLVQELNKKPIIKGLLTDSRSTISIIKSTNEEKFRNRFFGTKAMRLRDEVSGNNLYVYYIETKKNIADVMTKPLPIKTFKLLTNKWIH.

Polar residues-rich tracts occupy residues Met1–Ser23, Thr48–Ser60, Ser71–Asn97, and Gln129–Phe152. Disordered stretches follow at residues Met1–Asn97, Gln129–Pro171, and Gly352–Thr421. Residues Thr153–Thr165 are compositionally biased toward low complexity. Residues Asn299–His401 are RNA-binding. The span at Asn402 to Ser418 shows a compositional bias: low complexity. The active-site For protease activity; shared with dimeric partner is the Asp461. The segment at Asn583–Cys640 is integrase-type zinc finger-like. The region spanning Asn660–Pro835 is the Integrase catalytic domain. Mg(2+)-binding residues include Asp671 and Asp736. Residues Pro945–Tyr1166 are disordered. The span at Ser954–Thr963 shows a compositional bias: low complexity. Over residues Ser999–Thr1009 the composition is skewed to polar residues. Over residues Glu1032–Ser1047 the composition is skewed to basic and acidic residues. Polar residues-rich tracts occupy residues Tyr1048–Glu1076 and Ser1089–Leu1100. The Bipartite nuclear localization signal signature appears at Lys1172–Arg1206. The 139-residue stretch at Asn1332–Gln1470 folds into the Reverse transcriptase Ty1/copia-type domain. Positions 1340, 1421, 1422, 1604, 1646, and 1679 each coordinate Mg(2+). Positions Asp1604 to Lys1746 constitute an RNase H Ty1/copia-type domain.

As to quaternary structure, the capsid protein forms a homotrimer, from which the VLPs are assembled. The protease is a homodimer, whose active site consists of two apposed aspartic acid residues. Post-translationally, initially, virus-like particles (VLPs) are composed of the structural unprocessed proteins Gag and Gag-Pol, and also contain the host initiator methionine tRNA (tRNA(i)-Met) which serves as a primer for minus-strand DNA synthesis, and a dimer of genomic Ty RNA. Processing of the polyproteins occurs within the particle and proceeds by an ordered pathway, called maturation. First, the protease (PR) is released by autocatalytic cleavage of the Gag-Pol polyprotein yielding capsid protein p45 and a Pol-p154 precursor protein. This cleavage is a prerequisite for subsequent processing of Pol-p154 at the remaining sites to release the mature structural and catalytic proteins. Maturation takes place prior to the RT reaction and is required to produce transposition-competent VLPs.

It localises to the cytoplasm. Its subcellular location is the nucleus. The enzyme catalyses DNA(n) + a 2'-deoxyribonucleoside 5'-triphosphate = DNA(n+1) + diphosphate. The catalysed reaction is Endonucleolytic cleavage to 5'-phosphomonoester.. Capsid protein (CA) is the structural component of the virus-like particle (VLP), forming the shell that encapsulates the retrotransposons dimeric RNA genome. The particles are assembled from trimer-clustered units and there are holes in the capsid shells that allow for the diffusion of macromolecules. CA also has nucleocapsid-like chaperone activity, promoting primer tRNA(i)-Met annealing to the multipartite primer-binding site (PBS), dimerization of Ty1 RNA and initiation of reverse transcription. Functionally, the aspartyl protease (PR) mediates the proteolytic cleavages of the Gag and Gag-Pol polyproteins after assembly of the VLP. In terms of biological role, reverse transcriptase/ribonuclease H (RT) is a multifunctional enzyme that catalyzes the conversion of the retro-elements RNA genome into dsDNA within the VLP. The enzyme displays a DNA polymerase activity that can copy either DNA or RNA templates, and a ribonuclease H (RNase H) activity that cleaves the RNA strand of RNA-DNA heteroduplexes during plus-strand synthesis and hydrolyzes RNA primers. The conversion leads to a linear dsDNA copy of the retrotransposon that includes long terminal repeats (LTRs) at both ends. Its function is as follows. Integrase (IN) targets the VLP to the nucleus, where a subparticle preintegration complex (PIC) containing at least integrase and the newly synthesized dsDNA copy of the retrotransposon must transit the nuclear membrane. Once in the nucleus, integrase performs the integration of the dsDNA into the host genome. The chain is Transposon Ty1-NL2 Gag-Pol polyprotein (TY1B-NL2) from Saccharomyces cerevisiae (strain ATCC 204508 / S288c) (Baker's yeast).